Reading from the N-terminus, the 270-residue chain is DNA packaging protein OPG160 (270 aa).

55–62 contacts ATP; it reads VYNPDYDG.

It belongs to the orthopoxvirus OPG160 protein family. Interacts with protein OPG137.

Participates in viral DNA packaging and virion morphogenesis. In Homo sapiens (Human), this protein is DNA packaging protein OPG160 (OPG160).